A 548-amino-acid chain; its full sequence is Beta-lactamase-like protein 2 (548 aa).

A signal peptide spans M1–S24. N-linked (GlcNAc...) asparagine glycans are attached at residues N237, N258, N443, and N459.

This sequence belongs to the beta-lactamase family.

It localises to the secreted. The protein is Beta-lactamase-like protein 2 of Dictyostelium discoideum (Social amoeba).